The primary structure comprises 270 residues: 4-hydroxy-tetrahydrodipicolinate reductase (270 aa).

Residues 11–16 and E37 contribute to the NAD(+) site; that span reads GAGGRM. An NADP(+)-binding site is contributed by R38. NAD(+) is bound by residues 101-103 and 125-128; these read GTT and APNM. Residue H158 is the Proton donor/acceptor of the active site. H159 provides a ligand contact to (S)-2,3,4,5-tetrahydrodipicolinate. The active-site Proton donor is K162. 168 to 169 contributes to the (S)-2,3,4,5-tetrahydrodipicolinate binding site; the sequence is GT.

It belongs to the DapB family.

It localises to the cytoplasm. The catalysed reaction is (S)-2,3,4,5-tetrahydrodipicolinate + NAD(+) + H2O = (2S,4S)-4-hydroxy-2,3,4,5-tetrahydrodipicolinate + NADH + H(+). It carries out the reaction (S)-2,3,4,5-tetrahydrodipicolinate + NADP(+) + H2O = (2S,4S)-4-hydroxy-2,3,4,5-tetrahydrodipicolinate + NADPH + H(+). It participates in amino-acid biosynthesis; L-lysine biosynthesis via DAP pathway; (S)-tetrahydrodipicolinate from L-aspartate: step 4/4. In terms of biological role, catalyzes the conversion of 4-hydroxy-tetrahydrodipicolinate (HTPA) to tetrahydrodipicolinate. This Shewanella sp. (strain MR-4) protein is 4-hydroxy-tetrahydrodipicolinate reductase.